We begin with the raw amino-acid sequence, 176 residues long: Zinc finger protein 428 (176 aa).

The interval 1–152 (MTETREPTET…EEEGGTYHCT (152 aa)) is disordered. Acidic residues predominate over residues 16–46 (LEEDDEDLSPEPDSEEEEEEEEEETTDDPEY). T96 bears the Phosphothreonine mark. Basic and acidic residues predominate over residues 126–138 (PSRTGETRPAGRD). The C2H2-type zinc finger occupies 149–171 (YHCTECEDSFDNLGELHGHFMLH).

The polypeptide is Zinc finger protein 428 (Znf428) (Mus musculus (Mouse)).